Reading from the N-terminus, the 239-residue chain is Small ribosomal subunit protein uS3 (239 aa).

A KH type-2 domain is found at 39–107; the sequence is IREFIKEECK…ELHLNIVEVR (69 aa). Residues 212-221 are compositionally biased toward basic and acidic residues; that stretch reads PQARDRKAQE. Residues 212–239 are disordered; the sequence is PQARDRKAQELQDGPAPRGAGGNRRGDR. A compositionally biased stretch (gly residues) spans 230–239; that stretch reads GAGGNRRGDR.

The protein belongs to the universal ribosomal protein uS3 family. In terms of assembly, part of the 30S ribosomal subunit. Forms a tight complex with proteins S10 and S14.

In terms of biological role, binds the lower part of the 30S subunit head. Binds mRNA in the 70S ribosome, positioning it for translation. The polypeptide is Small ribosomal subunit protein uS3 (Ruegeria sp. (strain TM1040) (Silicibacter sp.)).